Reading from the N-terminus, the 485-residue chain is Glutamate--tRNA ligase (485 aa).

The short motif at 11 to 21 is the 'HIGH' region element; sequence PSPTGHLHIGN. The 'KMSKS' region motif lies at 252 to 256; it reads KLSKR. Lys-255 is an ATP binding site.

Belongs to the class-I aminoacyl-tRNA synthetase family. Glutamate--tRNA ligase type 1 subfamily. As to quaternary structure, monomer.

It is found in the cytoplasm. It carries out the reaction tRNA(Glu) + L-glutamate + ATP = L-glutamyl-tRNA(Glu) + AMP + diphosphate. Its function is as follows. Catalyzes the attachment of glutamate to tRNA(Glu) in a two-step reaction: glutamate is first activated by ATP to form Glu-AMP and then transferred to the acceptor end of tRNA(Glu). In Bacillus mycoides (strain KBAB4) (Bacillus weihenstephanensis), this protein is Glutamate--tRNA ligase.